The following is a 203-amino-acid chain: Endo-type membrane-bound lytic murein transglycosylase A (203 aa).

The first 15 residues, 1–15 (MKLRWFAFLVVLLAG), serve as a signal peptide directing secretion. The N-palmitoyl cysteine moiety is linked to residue C16. Residue C16 is the site of S-diacylglycerol cysteine attachment.

It belongs to the transglycosylase Slt family.

The protein localises to the cell outer membrane. It catalyses the reaction Endolytic cleavage of the (1-&gt;4)-beta-glycosidic linkage between N-acetylmuramic acid (MurNAc) and N-acetylglucosamine (GlcNAc) residues in peptidoglycan with concomitant formation of a 1,6-anhydrobond in the MurNAc residue.. Functionally, murein-degrading enzyme. May play a role in recycling of muropeptides during cell elongation and/or cell division. Preferentially cleaves at a distance of more than two disaccharide units from the ends of the glycan chain. The chain is Endo-type membrane-bound lytic murein transglycosylase A from Escherichia fergusonii (strain ATCC 35469 / DSM 13698 / CCUG 18766 / IAM 14443 / JCM 21226 / LMG 7866 / NBRC 102419 / NCTC 12128 / CDC 0568-73).